A 244-amino-acid polypeptide reads, in one-letter code: Mitophagy receptor atg43 (244 aa).

Residues 1–24 (MSSESKGIPIPRSDSNKTSDVSSW) form a disordered region. At 1-198 (MSSESKGIPI…LVALITLRDH (198 aa)) the chain is on the cytoplasmic side. The short motif at 28–31 (YELI) is the atg8 interacting motif (AIM) element. The segment at 105-131 (SLSLLQSKEEDDSSNWETEDSESAVEE) is disordered. A compositionally biased stretch (acidic residues) spans 113-131 (EEDDSSNWETEDSESAVEE). An involved in MIM complex binding. Required for normal vegetative cell population growth but is dispensable for mitophagy region spans residues 165-184 (PPIPDLRFQQSYLQSIQRAN). A helical membrane pass occupies residues 199–215 (VLYPFLSGGMWVFVRHI). Over 216–244 (FQFLKLQEKGFHFGQSLRRNLGLFSTFKD) the chain is Mitochondrial intermembrane.

Interacts (via N-terminal atg8 interacting motif) with atg8; the interaction is direct. Interacts with the mitochondrial outer import machinery (MIM) complex subunits mim1 and mim2.

The protein localises to the mitochondrion outer membrane. In terms of biological role, mitophagy receptor that tethers atg8 to the mitochondrial outer membrane to promote selective autophagy. In Schizosaccharomyces pombe (strain 972 / ATCC 24843) (Fission yeast), this protein is Mitophagy receptor atg43.